Consider the following 307-residue polypeptide: NAD kinase (307 aa).

The Proton acceptor role is filled by Asp-85. Residues 85 to 86 (DG), Arg-90, 159 to 160 (NE), Asp-189, and 200 to 205 (TAYAFS) each bind NAD(+).

This sequence belongs to the NAD kinase family. A divalent metal cation serves as cofactor.

It localises to the cytoplasm. It carries out the reaction NAD(+) + ATP = ADP + NADP(+) + H(+). Functionally, involved in the regulation of the intracellular balance of NAD and NADP, and is a key enzyme in the biosynthesis of NADP. Catalyzes specifically the phosphorylation on 2'-hydroxyl of the adenosine moiety of NAD to yield NADP. This chain is NAD kinase, found in Mycobacterium bovis (strain ATCC BAA-935 / AF2122/97).